The primary structure comprises 467 residues: UDP-N-acetylmuramoylalanine--D-glutamate ligase (467 aa).

118 to 124 (GTNGKTT) is an ATP binding site.

It belongs to the MurCDEF family.

It localises to the cytoplasm. The catalysed reaction is UDP-N-acetyl-alpha-D-muramoyl-L-alanine + D-glutamate + ATP = UDP-N-acetyl-alpha-D-muramoyl-L-alanyl-D-glutamate + ADP + phosphate + H(+). Its pathway is cell wall biogenesis; peptidoglycan biosynthesis. In terms of biological role, cell wall formation. Catalyzes the addition of glutamate to the nucleotide precursor UDP-N-acetylmuramoyl-L-alanine (UMA). The protein is UDP-N-acetylmuramoylalanine--D-glutamate ligase of Streptomyces avermitilis (strain ATCC 31267 / DSM 46492 / JCM 5070 / NBRC 14893 / NCIMB 12804 / NRRL 8165 / MA-4680).